A 380-amino-acid polypeptide reads, in one-letter code: tRNA-specific 2-thiouridylase MnmA (380 aa).

ATP is bound by residues 14–21 (GLSGGVDS) and methionine 40. An interaction with target base in tRNA region spans residues 100–102 (NPD). Catalysis depends on cysteine 105, which acts as the Nucleophile. Cysteine 105 and cysteine 203 are disulfide-bonded. ATP is bound at residue glycine 129. Positions 153 to 155 (KDQ) are interaction with tRNA. Catalysis depends on cysteine 203, which acts as the Cysteine persulfide intermediate. The tract at residues 322–323 (RY) is interaction with tRNA.

It belongs to the MnmA/TRMU family.

The protein resides in the cytoplasm. The catalysed reaction is S-sulfanyl-L-cysteinyl-[protein] + uridine(34) in tRNA + AH2 + ATP = 2-thiouridine(34) in tRNA + L-cysteinyl-[protein] + A + AMP + diphosphate + H(+). Its function is as follows. Catalyzes the 2-thiolation of uridine at the wobble position (U34) of tRNA, leading to the formation of s(2)U34. The protein is tRNA-specific 2-thiouridylase MnmA of Leptothrix cholodnii (strain ATCC 51168 / LMG 8142 / SP-6) (Leptothrix discophora (strain SP-6)).